Reading from the N-terminus, the 278-residue chain is Adenylate kinase (278 aa).

50-55 provides a ligand contact to ATP; it reads GAGKGT. Residues 70 to 99 are NMP; the sequence is ATGDMLRAQVAKGTALGKQAKKIMNEGGLV. Residues threonine 71, arginine 76, 97 to 99, 126 to 129, and glutamine 133 contribute to the AMP site; these read GLV and GFPR. The interval 167–204 is LID; that stretch reads GRLVHPASGRSYHRIFNPPKDDMKDDITGEPLVQRSDD. Residues arginine 168 and 177-178 each bind ATP; that span reads SY. Residues arginine 201 and arginine 212 each coordinate AMP. Residue glutamine 240 participates in ATP binding.

Belongs to the adenylate kinase family. AK2 subfamily. In terms of assembly, monomer.

Its subcellular location is the cytoplasm. It localises to the cytosol. It is found in the mitochondrion intermembrane space. The catalysed reaction is AMP + ATP = 2 ADP. Catalyzes the reversible transfer of the terminal phosphate group between ATP and AMP. Plays an important role in cellular energy homeostasis and in adenine nucleotide metabolism. Adenylate kinase activity is critical for regulation of the phosphate utilization and the AMP de novo biosynthesis pathways. The sequence is that of Adenylate kinase (adk-1) from Neurospora crassa (strain ATCC 24698 / 74-OR23-1A / CBS 708.71 / DSM 1257 / FGSC 987).